The chain runs to 237 residues: Methylosome subunit pICln (237 aa).

Ser2 carries the N-acetylserine modification. A phosphoserine mark is found at Ser102, Ser144, Ser193, Ser195, Ser198, and Ser210. The tract at residues Leu135 to Gln159 is disordered. Positions Pro139–Asp153 are enriched in acidic residues. Thr223 carries the phosphothreonine modification.

This sequence belongs to the pICln (TC 1.A.47) family. Component of the methylosome, a 20S complex containing at least PRMT5/SKB1, WDR77/MEP50 and CLNS1A/pICln. May mediate SNRPD1 and SNRPD3 methylation. Forms a 6S pICln-Sm complex composed of CLNS1A/pICln, SNRPD1, SNRPD2, SNRPE, SNRPF and SNRPG; ring-like structure where CLNS1A/pICln mimics additional Sm proteins and which is unable to assemble into the core snRNP. Interacts with LSM10 and LSM11.

The protein resides in the cytoplasm. Its subcellular location is the cytosol. The protein localises to the nucleus. It localises to the cytoskeleton. Involved in both the assembly of spliceosomal snRNPs and the methylation of Sm proteins. Chaperone that regulates the assembly of spliceosomal U1, U2, U4 and U5 small nuclear ribonucleoproteins (snRNPs), the building blocks of the spliceosome, and thereby plays an important role in the splicing of cellular pre-mRNAs. Most spliceosomal snRNPs contain a common set of Sm proteins SNRPB, SNRPD1, SNRPD2, SNRPD3, SNRPE, SNRPF and SNRPG that assemble in a heptameric protein ring on the Sm site of the small nuclear RNA to form the core snRNP (Sm core). In the cytosol, the Sm proteins SNRPD1, SNRPD2, SNRPE, SNRPF and SNRPG are trapped in an inactive 6S pICln-Sm complex by the chaperone CLNS1A that controls the assembly of the core snRNP. Dissociation by the SMN complex of CLNS1A from the trapped Sm proteins and their transfer to an SMN-Sm complex triggers the assembly of core snRNPs and their transport to the nucleus. This Homo sapiens (Human) protein is Methylosome subunit pICln (CLNS1A).